Consider the following 309-residue polypeptide: HPr kinase/phosphorylase (309 aa).

Catalysis depends on residues H138 and K159. 153–160 (GQSGVGKS) is a binding site for ATP. S160 is a binding site for Mg(2+). The Proton acceptor; for phosphorylation activity. Proton donor; for dephosphorylation activity role is filled by D177. The tract at residues 201-210 (LEIRGLGIIN) is important for the catalytic mechanism of both phosphorylation and dephosphorylation. Residue E202 participates in Mg(2+) binding. R243 is a catalytic residue. Residues 264 to 269 (PVRPGR) are important for the catalytic mechanism of dephosphorylation.

The protein belongs to the HPrK/P family. As to quaternary structure, homohexamer. Mg(2+) serves as cofactor.

It catalyses the reaction [HPr protein]-L-serine + ATP = [HPr protein]-O-phospho-L-serine + ADP + H(+). The enzyme catalyses [HPr protein]-O-phospho-L-serine + phosphate + H(+) = [HPr protein]-L-serine + diphosphate. In terms of biological role, catalyzes the ATP- as well as the pyrophosphate-dependent phosphorylation of a specific serine residue in HPr, a phosphocarrier protein of the phosphoenolpyruvate-dependent sugar phosphotransferase system (PTS). HprK/P also catalyzes the pyrophosphate-producing, inorganic phosphate-dependent dephosphorylation (phosphorolysis) of seryl-phosphorylated HPr (P-Ser-HPr). The two antagonistic activities of HprK/P are regulated by several intracellular metabolites, which change their concentration in response to the absence or presence of rapidly metabolisable carbon sources (glucose, fructose, etc.) in the growth medium. Also phosphorylates/dephosphorylates the HPr-like catabolite repression protein crh on a specific serine residue. Therefore, by controlling the phosphorylation state of HPr and crh, HPrK/P is a sensor enzyme that plays a major role in the regulation of carbon metabolism and sugar transport: it mediates carbon catabolite repression (CCR), and regulates PTS-catalyzed carbohydrate uptake and inducer exclusion. The polypeptide is HPr kinase/phosphorylase (Bacillus cereus (strain AH820)).